The following is a 334-amino-acid chain: Biotin synthase (334 aa).

Positions 55 to 280 constitute a Radical SAM core domain; the sequence is EEIEVEGIIS…HTMLRFAGGR (226 aa). Residues Cys70, Cys74, and Cys77 each contribute to the [4Fe-4S] cluster site. The [2Fe-2S] cluster site is built by Cys113, Cys205, and Arg275.

The protein belongs to the radical SAM superfamily. Biotin synthase family. In terms of assembly, homodimer. [4Fe-4S] cluster is required as a cofactor. It depends on [2Fe-2S] cluster as a cofactor.

It carries out the reaction (4R,5S)-dethiobiotin + (sulfur carrier)-SH + 2 reduced [2Fe-2S]-[ferredoxin] + 2 S-adenosyl-L-methionine = (sulfur carrier)-H + biotin + 2 5'-deoxyadenosine + 2 L-methionine + 2 oxidized [2Fe-2S]-[ferredoxin]. It functions in the pathway cofactor biosynthesis; biotin biosynthesis; biotin from 7,8-diaminononanoate: step 2/2. Catalyzes the conversion of dethiobiotin (DTB) to biotin by the insertion of a sulfur atom into dethiobiotin via a radical-based mechanism. The protein is Biotin synthase of Corynebacterium glutamicum (strain R).